The following is a 92-amino-acid chain: YcgL domain-containing protein Sama_1929 (92 aa).

Residues 1-85 (MICAVYKSSR…PKDNLLTQHR (85 aa)) form the YcgL domain.

The protein is YcgL domain-containing protein Sama_1929 of Shewanella amazonensis (strain ATCC BAA-1098 / SB2B).